The sequence spans 283 residues: MSALPSPSPRPARSQYEDFLRHVRDHGVVKADRTGTGTTSVFGHQMRFDLREGFPLVTTKKVHLKSIVLELLWFLRGDGNATWLQERGVTIWDEWAAPDGDLGPVYGVQWRSWPTPDGGHVDQIAEVVKQLKTNPDSRRIIVSAWNVADLPKMALMPCHAFFQFYVAPGDSPSARGRLSCQLYQRSADIFLGVPFNIASYALLTHMLAQQCDLEVGDFVWTGGDCHIYSNHREQVELQLSRAPRPYPTLQIKRRPPSIFDYAYEDFEIIGYDPHPAIKAPVAV.

Arginine 33 is a dUMP binding site. Position 63 (histidine 63) interacts with (6R)-5,10-methylene-5,6,7,8-tetrahydrofolate. 138–139 contributes to the dUMP binding site; sequence RR. Residue cysteine 158 is the Nucleophile of the active site. DUMP-binding positions include 185 to 188, asparagine 196, and 226 to 228; these read RSAD and HIY. Aspartate 188 serves as a coordination point for (6R)-5,10-methylene-5,6,7,8-tetrahydrofolate. (6R)-5,10-methylene-5,6,7,8-tetrahydrofolate is bound at residue alanine 282.

The protein belongs to the thymidylate synthase family. Bacterial-type ThyA subfamily. As to quaternary structure, homodimer.

It is found in the cytoplasm. The catalysed reaction is dUMP + (6R)-5,10-methylene-5,6,7,8-tetrahydrofolate = 7,8-dihydrofolate + dTMP. The protein operates within pyrimidine metabolism; dTTP biosynthesis. Catalyzes the reductive methylation of 2'-deoxyuridine-5'-monophosphate (dUMP) to 2'-deoxythymidine-5'-monophosphate (dTMP) while utilizing 5,10-methylenetetrahydrofolate (mTHF) as the methyl donor and reductant in the reaction, yielding dihydrofolate (DHF) as a by-product. This enzymatic reaction provides an intracellular de novo source of dTMP, an essential precursor for DNA biosynthesis. This Methylibium petroleiphilum (strain ATCC BAA-1232 / LMG 22953 / PM1) protein is Thymidylate synthase.